The chain runs to 349 residues: Hepatic sodium/bile acid cotransporter (349 aa).

Over 1–22 (MEAHNASAPFNFTLPPNFGKRP) the chain is Extracellular. Residues asparagine 5 and asparagine 11 are each glycosylated (N-linked (GlcNAc...) asparagine). The chain crosses the membrane as a helical span at residues 23–44 (TDLALSVILVFMLFFIMLSLGC). Residues 45–47 (TME) lie on the Cytoplasmic side of the membrane. Residues 48–83 (FSKIKAHLWKPKGLAIALVAQYGIMPLTAFVLGKVF) traverse the membrane as a helical segment. Topologically, residues 84–86 (RLK) are extracellular. A discontinuously helical membrane pass occupies residues 87-112 (NIEALAILVCGCSPGGNLSNVFSLAM). Residues 113–115 (KGD) are Cytoplasmic-facing. Residues 116–142 (MNLSIVMTTCSTFCALGMMPLLLYIYS) traverse the membrane as a helical segment. The Extracellular segment spans residues 143-156 (RGIYDGDLKDKVPY). A helical transmembrane segment spans residues 157-179 (KGIVISLVLVLIPCTIGIVLKSK). At 180–183 (RPQY) the chain is on the cytoplasmic side. Residues 184–217 (MRYVIKGGMIIILLCSVAVTVLSAINVGKSIMFA) form a helical membrane-spanning segment. Over 218 to 219 (MT) the chain is Extracellular. A helical membrane pass occupies residues 220–243 (PLLIATSSLMPFIGFLLGYVLSAL). Residues 244-247 (FCLN) lie on the Cytoplasmic side of the membrane. A discontinuously helical membrane pass occupies residues 248–273 (GRCRRTVSMETGCQNVQLCSTILNVA). Residues 274-280 (FPPEVIG) lie on the Extracellular side of the membrane. A helical transmembrane segment spans residues 281–311 (PLFFFPLLYMIFQLGEGLLLIAIFWCYEKFK). At 312 to 349 (TPKDKTKMIYTAATTEETIPGALGNGTYKGEDCSPCTA) the chain is on the cytoplasmic side.

It belongs to the bile acid:sodium symporter (BASS) (TC 2.A.28) family. (Microbial infection) Interacts with the myristoylated pre-S1 domain of hepatitis B virus large envelope protein; myristoylation is essential for this interaction. In terms of tissue distribution, expressed in liver. Expressed in placental trophoblasts.

The protein resides in the cell membrane. It catalyses the reaction taurocholate(out) + 2 Na(+)(out) = taurocholate(in) + 2 Na(+)(in). The enzyme catalyses cholate(out) + 2 Na(+)(out) = cholate(in) + 2 Na(+)(in). It carries out the reaction estrone 3-sulfate(out) + 2 Na(+)(out) = estrone 3-sulfate(in) + 2 Na(+)(in). The catalysed reaction is taurochenodeoxycholate(out) + 2 Na(+)(out) = taurochenodeoxycholate(in) + 2 Na(+)(in). It catalyses the reaction tauroursodeoxycholate(out) + 2 Na(+)(out) = tauroursodeoxycholate(in) + 2 Na(+)(in). The enzyme catalyses glycocholate(out) + 2 Na(+)(out) = glycocholate(in) + 2 Na(+)(in). It carries out the reaction tauronorcholate(out) + 2 Na(+)(out) = tauronorcholate(in) + 2 Na(+)(in). The catalysed reaction is taurodeoxycholate(out) + 2 Na(+)(out) = taurodeoxycholate(in) + 2 Na(+)(in). It catalyses the reaction tauroallocholate(out) + 2 Na(+)(out) = tauroallocholate(in) + 2 Na(+)(in). The enzyme catalyses taurohyodeoxycholate(out) + 2 Na(+)(out) = taurohyodeoxycholate(in) + 2 Na(+)(in). It carries out the reaction taurohyocholate(out) + 2 Na(+)(out) = taurohyocholate(in) + 2 Na(+)(in). The catalysed reaction is tauro-beta-muricholate(out) + 2 Na(+)(out) = tauro-beta-muricholate(in) + 2 Na(+)(in). With respect to regulation, the transport of bile acids is sodium-dependent. Functionally, as a major transporter of conjugated bile salts from plasma into the hepatocyte, it plays a key role in the enterohepatic circulation of bile salts necessary for the solubilization and absorption of dietary fat and fat-soluble vitamins. It is strictly dependent on the extracellular presence of sodium. It exhibits broad substrate specificity and transports various bile acids, such as taurocholate, cholate, as well as non-bile acid organic compounds, such as estrone sulfate. Works collaboratively with the ileal transporter (NTCP2), the organic solute transporter (OST), and the bile salt export pump (BSEP), to ensure efficacious biological recycling of bile acids during enterohepatic circulation. In terms of biological role, (Microbial infection) Acts as an entry receptor for hepatitis B virus (HBV). The recognition for human SLC10A1/NTCP is highly specific. The protein is Hepatic sodium/bile acid cotransporter (SLC10A1) of Homo sapiens (Human).